Here is a 278-residue protein sequence, read N- to C-terminus: Formamidopyrimidine-DNA glycosylase (278 aa).

The Schiff-base intermediate with DNA role is filled by proline 2. The Proton donor role is filled by glutamate 3. The active-site Proton donor; for beta-elimination activity is lysine 59. The DNA site is built by histidine 93, arginine 112, and arginine 153. The FPG-type zinc finger occupies 238-272 (NVYDRAGEPCPRCQSTIERIVVAQRSTYFCPTCQI). Catalysis depends on arginine 262, which acts as the Proton donor; for delta-elimination activity.

It belongs to the FPG family. As to quaternary structure, monomer. It depends on Zn(2+) as a cofactor.

It carries out the reaction Hydrolysis of DNA containing ring-opened 7-methylguanine residues, releasing 2,6-diamino-4-hydroxy-5-(N-methyl)formamidopyrimidine.. It catalyses the reaction 2'-deoxyribonucleotide-(2'-deoxyribose 5'-phosphate)-2'-deoxyribonucleotide-DNA = a 3'-end 2'-deoxyribonucleotide-(2,3-dehydro-2,3-deoxyribose 5'-phosphate)-DNA + a 5'-end 5'-phospho-2'-deoxyribonucleoside-DNA + H(+). Functionally, involved in base excision repair of DNA damaged by oxidation or by mutagenic agents. Acts as a DNA glycosylase that recognizes and removes damaged bases. Has a preference for oxidized purines, such as 7,8-dihydro-8-oxoguanine (8-oxoG). Has AP (apurinic/apyrimidinic) lyase activity and introduces nicks in the DNA strand. Cleaves the DNA backbone by beta-delta elimination to generate a single-strand break at the site of the removed base with both 3'- and 5'-phosphates. The protein is Formamidopyrimidine-DNA glycosylase of Chloroflexus aurantiacus (strain ATCC 29366 / DSM 635 / J-10-fl).